We begin with the raw amino-acid sequence, 193 residues long: Adenine phosphoribosyltransferase (193 aa).

The protein belongs to the purine/pyrimidine phosphoribosyltransferase family. In terms of assembly, homodimer.

It localises to the cytoplasm. It catalyses the reaction AMP + diphosphate = 5-phospho-alpha-D-ribose 1-diphosphate + adenine. It functions in the pathway purine metabolism; AMP biosynthesis via salvage pathway; AMP from adenine: step 1/1. Catalyzes a salvage reaction resulting in the formation of AMP, that is energically less costly than de novo synthesis. This is Adenine phosphoribosyltransferase from Bifidobacterium adolescentis (strain ATCC 15703 / DSM 20083 / NCTC 11814 / E194a).